The primary structure comprises 433 residues: FAD-dependent monooxygenase notI (433 aa).

FAD contacts are provided by glutamate 45 and arginine 117. Arginine 195 is an active-site residue. FAD contacts are provided by aspartate 314 and alanine 327.

This sequence belongs to the paxM FAD-dependent monooxygenase family. FAD serves as cofactor.

It functions in the pathway alkaloid biosynthesis. Functionally, FAD-dependent monooxygenase; part of the gene cluster that mediates the biosynthesis of notoamide, a fungal indole alkaloid that belongs to a family of natural products containing a characteristic bicyclo[2.2.2]diazaoctane core. The first step of notoamide biosynthesis involves coupling of L-proline and L-tryptophan by the bimodular NRPS notE, to produce cyclo-L-tryptophan-L-proline called brevianamide F. The reverse prenyltransferase notF then acts as a deoxybrevianamide E synthase and converts brevianamide F to deoxybrevianamide E via reverse prenylation at C-2 of the indole ring leading to the bicyclo[2.2.2]diazaoctane core. Deoxybrevianamide E is further hydroxylated at C-6 of the indole ring, likely catalyzed by the cytochrome P450 monooxygenase notG, to yield 6-hydroxy-deoxybrevianamide E. 6-hydroxy-deoxybrevianamide E is a specific substrate of the prenyltransferase notC for normal prenylation at C-7 to produce 6-hydroxy-7-prenyl-deoxybrevianamide, also called notoamide S. As the proposed pivotal branching point in notoamide biosynthesis, notoamide S can be diverted to notoamide E through an oxidative pyran ring closure putatively catalyzed by either notH cytochrome P450 monooxygenase or the notD FAD-linked oxidoreductase. This step would be followed by an indole 2,3-epoxidation-initiated pinacol-like rearrangement catalyzed by the notB FAD-dependent monooxygenase leading to the formation of notoamide C and notoamide D. On the other hand notoamide S is converted to notoamide T by notH (or notD), a bifunctional oxidase that also functions as the intramolecular Diels-Alderase responsible for generation of (+)-notoamide T. To generate antipodal (-)-notoaminide T, notH' (or notD') in Aspergillus versicolor is expected to catalyze a Diels-Alder reaction leading to the opposite stereochemistry. The remaining oxidoreductase notD (or notH) likely catalyzes the oxidative pyran ring formation to yield (+)-stephacidin A. The FAD-dependent monooxygenase notI is highly similar to notB and is predicted to catalyze a similar conversion from (+)-stephacidin A to (-)-notoamide B via the 2,3-epoxidation of (+)-stephacidin A followed by a pinacol-type rearrangement. Finally, it remains unclear which enzyme could be responsible for the final hydroxylation steps leading to notoamide A and sclerotiamide. This Aspergillus sp. (strain MF297-2) protein is FAD-dependent monooxygenase notI.